Here is a 1373-residue protein sequence, read N- to C-terminus: DNA-directed RNA polymerase subunit beta (1373 aa).

It belongs to the RNA polymerase beta chain family. As to quaternary structure, the RNAP catalytic core consists of 2 alpha, 1 beta, 1 beta' and 1 omega subunit. When a sigma factor is associated with the core the holoenzyme is formed, which can initiate transcription.

The catalysed reaction is RNA(n) + a ribonucleoside 5'-triphosphate = RNA(n+1) + diphosphate. Its function is as follows. DNA-dependent RNA polymerase catalyzes the transcription of DNA into RNA using the four ribonucleoside triphosphates as substrates. The sequence is that of DNA-directed RNA polymerase subunit beta from Rickettsia canadensis (strain McKiel).